The sequence spans 487 residues: NAD(+)--arginine ADP-ribosyltransferase EFV (487 aa).

A coiled-coil region spans residues 2–51; the sequence is SQLNKWQKELQALQKANYQETDNQLFNVYRQSLIDIKKRLKVYTENAESL. The 173-residue stretch at 315-487 folds into the TR mART core domain; the sequence is LDFFGQSDLQ…DNILEVTILG (173 aa). NAD(+) contacts are provided by residues 346-358 and 394-400; these read TSDA…KILR and RGVSANE. Active-site residues include R394, S415, and E463. An NAD(+)-binding site is contributed by E463.

The protein localises to the secreted. The enzyme catalyses L-arginyl-[protein] + NAD(+) = N(omega)-(ADP-D-ribosyl)-L-arginyl-[protein] + nicotinamide + H(+). In terms of biological role, a probable mono(ADP-ribosyl)transferase, it may ADP-ribosylate Arg in target protein(s). Upon expression in yeast cells causes cell death. The protein is NAD(+)--arginine ADP-ribosyltransferase EFV of Enterococcus faecalis (strain ATCC 700802 / V583).